The primary structure comprises 200 residues: MRLVVGMTGATGAPFGVRLLENLRQLPGVETHLVLSRWARTTIEMETGLSVAEVSALADVTHHPEDQGATISSGSFRTDGMVIVPCSMKTLAGIRTGYAEGLVARAADVVLKERRRLVLVPRETPLSEIHLQNMLELARMGVQLVPPMPAFYNNPQTVDDIVDHVVARILDQFDLPAPAARRWAGMRAARAAARSFGDAA.

Residues glycine 9–threonine 11, serine 36, serine 87–threonine 90, and arginine 122 contribute to the FMN site.

The protein belongs to the UbiX/PAD1 family. YclB subfamily. In terms of assembly, homododecamer.

The catalysed reaction is dimethylallyl phosphate + FMNH2 = prenylated FMNH2 + phosphate. Involved in the non-oxidative decarboxylation and detoxification of phenolic derivatives under both aerobic and anaerobic conditions. Flavin prenyltransferase that catalyzes the synthesis of the prenylated FMN cofactor (prenyl-FMN) for phenolic acid decarboxylase. This Streptomyces sp. (strain D7) protein is Probable UbiX-like flavin prenyltransferase.